We begin with the raw amino-acid sequence, 713 residues long: BBSome complex assembly protein BBS10 (713 aa).

This sequence belongs to the TCP-1 chaperonin family. As to quaternary structure, component of a complex composed at least of MKKS, BBS10, BBS12, TCP1, CCT2, CCT3, CCT4, CCT5 and CCT8.

The protein localises to the cell projection. The protein resides in the cilium. In terms of biological role, probable molecular chaperone that assists the folding of proteins upon ATP hydrolysis. Plays a role in the assembly of BBSome, a complex involved in ciliogenesis regulating transports vesicles to the cilia. Involved in adipogenic differentiation. This is BBSome complex assembly protein BBS10 (Bbs10) from Mus musculus (Mouse).